The chain runs to 421 residues: Bone morphogenetic protein 10 (421 aa).

The first 21 residues, 1–21 (MGSLVLPLSAVFCLVAHSASG), serve as a signal peptide directing secretion. Positions 22–313 (SPIMGLEQSP…IDDSSARIRR (292 aa)) are excised as a propeptide. N-linked (GlcNAc...) asparagine glycans are attached at residues N67 and N131. 3 cysteine pairs are disulfide-bonded: C320/C386, C349/C418, and C353/C420.

Belongs to the TGF-beta family. In terms of assembly, homodimer; disulfide-linked. Interacts with FBN1 (via N-terminal domain) and FBN2. Interacts with ENG. In the embryo, expressed exclusively in the ventricular trabecular myocardium of the developing heart from 9.0 dpc-13.5 dpc. By 16.5 dpc-18.5 dpc, only detectable in atria. Highly expressed in the adult heart where it is found in the right atrium but not in the left atrium. Lower levels in adult liver and lung.

It localises to the secreted. Functionally, required for maintaining the proliferative activity of embryonic cardiomyocytes by preventing premature activation of the negative cell cycle regulator CDKN1C/p57KIP and maintaining the required expression levels of cardiogenic factors such as MEF2C and NKX2-5. Acts as a ligand for ACVRL1/ALK1, BMPR1A/ALK3 and BMPR1B/ALK6, leading to activation of SMAD1, SMAD5 and SMAD8 transcription factors. Inhibits endothelial cell migration and growth. May reduce cell migration and cell matrix adhesion in breast cancer cell lines. This chain is Bone morphogenetic protein 10 (Bmp10), found in Mus musculus (Mouse).